Consider the following 63-residue polypeptide: Large ribosomal subunit protein uL30 (63 aa).

Belongs to the universal ribosomal protein uL30 family. In terms of assembly, part of the 50S ribosomal subunit.

This is Large ribosomal subunit protein uL30 from Granulibacter bethesdensis (strain ATCC BAA-1260 / CGDNIH1).